The following is an 80-amino-acid chain: Phycocyanin-645 alpha-1 chain (80 aa).

R16 is a binding site for (2R,3E)-phycocyanobilin. Mesobiliverdin contacts are provided by C18, Q24, Y25, and K40. Positions 71 and 73 each coordinate 15,16-dihydrobiliverdin.

The protein belongs to the phycoerythrin family. As to quaternary structure, heterotetramer of 2 different alpha chains and 2 identical beta chains which form 2 alpha-beta heterodimers within the heterotetramer. In terms of processing, contains one phycocyanobilin chromophore, one mesobiliverdin chromophore and one 15,16-dihydrobiliverdin chromophore with binding mediated by both the alpha and beta subunits.

The protein localises to the plastid. It localises to the chloroplast thylakoid membrane. Light-harvesting photosynthetic tetrapyrrole chromophore-protein from the phycobiliprotein complex. This Chroomonas sp protein is Phycocyanin-645 alpha-1 chain.